The following is a 229-amino-acid chain: Urease accessory protein UreF (229 aa).

This sequence belongs to the UreF family. In terms of assembly, ureD, UreF and UreG form a complex that acts as a GTP-hydrolysis-dependent molecular chaperone, activating the urease apoprotein by helping to assemble the nickel containing metallocenter of UreC. The UreE protein probably delivers the nickel.

It localises to the cytoplasm. In terms of biological role, required for maturation of urease via the functional incorporation of the urease nickel metallocenter. The polypeptide is Urease accessory protein UreF (Staphylococcus epidermidis (strain ATCC 35984 / DSM 28319 / BCRC 17069 / CCUG 31568 / BM 3577 / RP62A)).